We begin with the raw amino-acid sequence, 357 residues long: tRNA-specific 2-thiouridylase MnmA (357 aa).

ATP is bound by residues 7–14 (GMSGGVDS) and Met33. Cys103 (nucleophile) is an active-site residue. A disulfide bond links Cys103 and Cys200. Gly127 contacts ATP. Residues 150–152 (KDQ) form an interaction with tRNA region. The active-site Cysteine persulfide intermediate is Cys200. The tract at residues 306 to 307 (RY) is interaction with tRNA.

It belongs to the MnmA/TRMU family.

The protein localises to the cytoplasm. It catalyses the reaction S-sulfanyl-L-cysteinyl-[protein] + uridine(34) in tRNA + AH2 + ATP = 2-thiouridine(34) in tRNA + L-cysteinyl-[protein] + A + AMP + diphosphate + H(+). In terms of biological role, catalyzes the 2-thiolation of uridine at the wobble position (U34) of tRNA, leading to the formation of s(2)U34. The protein is tRNA-specific 2-thiouridylase MnmA of Lachnoclostridium phytofermentans (strain ATCC 700394 / DSM 18823 / ISDg) (Clostridium phytofermentans).